Here is a 605-residue protein sequence, read N- to C-terminus: Capsid scaffolding protein (605 aa).

Residues H48, S116, and H139 each act as charge relay system in the active site. Residues 235–274 (ASDAPDLQKPDKALQSPPPASTDPATMLSGNAGEGATACG) are disordered. The tract at residues 281–300 (QDLISVPRNTFMTLLQTNLD) is interaction with pAP. 2 disordered regions span residues 403 to 431 (DYVPAPSRSNKRKRDPEEDEEGGGLFPGE) and 489 to 588 (PHQS…KSVS). The short motif at 410–416 (RSNKRKR) is the Nuclear localization signal element. Positions 568 to 579 (ASASGVAQSKEP) are enriched in polar residues. Residues 585-605 (KSVSAHLKSIFCEELLNKRVA) form an interaction with major capsid protein region.

This sequence belongs to the herpesviridae capsid scaffolding protein family. Homomultimer. Interacts with major capsid protein. In terms of assembly, exists in a monomer-dimer equilibrium with the dimer being the active species. In terms of processing, capsid scaffolding protein is cleaved by assemblin after formation of the spherical procapsid. As a result, the capsid obtains its mature, icosahedral shape. Cleavages occur at two or more sites: release (R-site) and maturation (M-site).

The protein localises to the host cytoplasm. The protein resides in the host nucleus. The catalysed reaction is Cleaves -Ala-|-Ser- and -Ala-|-Ala- bonds in the scaffold protein.. Functionally, acts as a scaffold protein by binding major capsid protein in the cytoplasm, inducing the nuclear localization of both proteins. Multimerizes in the nucleus such as major capsid protein forms the icosahedral T=16 capsid. Autocatalytic cleavage releases the assembly protein, and subsequently abolishes interaction with major capsid protein. Cleavages products are evicted from the capsid before or during DNA packaging. Its function is as follows. Protease that plays an essential role in virion assembly within the nucleus. Catalyzes the cleavage of the assembly protein after formation of the spherical procapsid. By that cleavage, the capsid matures and gains its icosahedral shape. The cleavage sites seem to include -Ala-Ser-, -Ala-Ala-, as well as Ala-Thr bonds. Assemblin and cleavages products are evicted from the capsid before or during DNA packaging. In terms of biological role, plays a major role in capsid assembly. Acts as a scaffold protein by binding major capsid protein. Multimerizes in the nucleus such as major capsid protein forms the icosahedral T=16 capsid. Cleaved by assemblin after capsid completion. The cleavages products are evicted from the capsid before or during DNA packaging. This Homo sapiens (Human) protein is Capsid scaffolding protein.